A 352-amino-acid polypeptide reads, in one-letter code: MSGNTLGSLFRVTNFGESHGPAIGCVVDGCPPGLPLDAADIQRELDRRRPGTSRHVTQRQEADQVEILSGVYEGVTTGTPIGLLIRNIDARSKDYSNIADTFRPGHADYSYWKKFGQRDPRGGGRSSARLTAPTVAAGAIAKKWLAQQHGTIVRGYMSQLGPIEIPFVSWDEVPNNPFYAPNAAIVPELEAYMDALRRDGDSIGARIEVVAEHLPAGWGEPIYDRLDADIAHAMMGLNAVKGVSIGAGFGSITQRGSEHGDEITPDGFLSNHAGGVLGGISTGQPVTVSLAIKPTSSIRVERRSVNRAGEPVNVQTLGRHDPCVGIRATPIAEALLALVLIDHALRHRGQCG.

Residues Arg48 and Arg54 each coordinate NADP(+). FMN contacts are provided by residues 125 to 127 (RSS), 238 to 239 (NA), Gly278, 293 to 297 (KPTSS), and Arg319.

It belongs to the chorismate synthase family. As to quaternary structure, homotetramer. It depends on FMNH2 as a cofactor.

It carries out the reaction 5-O-(1-carboxyvinyl)-3-phosphoshikimate = chorismate + phosphate. The protein operates within metabolic intermediate biosynthesis; chorismate biosynthesis; chorismate from D-erythrose 4-phosphate and phosphoenolpyruvate: step 7/7. Functionally, catalyzes the anti-1,4-elimination of the C-3 phosphate and the C-6 proR hydrogen from 5-enolpyruvylshikimate-3-phosphate (EPSP) to yield chorismate, which is the branch point compound that serves as the starting substrate for the three terminal pathways of aromatic amino acid biosynthesis. This reaction introduces a second double bond into the aromatic ring system. This is Chorismate synthase from Bordetella avium (strain 197N).